Here is a 59-residue protein sequence, read N- to C-terminus: MKAFYGILIIFILISMIHLSQQVFINATCTVTSQCRPKCIEAIGQAASKCINRKCKCYP.

A signal peptide spans 1–22 (MKAFYGILIIFILISMIHLSQQ). 3 cysteine pairs are disulfide-bonded: cysteine 29–cysteine 50, cysteine 35–cysteine 55, and cysteine 39–cysteine 57.

This sequence belongs to the short scorpion toxin superfamily. Potassium channel inhibitor family. Alpha-KTx 04 subfamily. As to expression, expressed by the venom gland.

It is found in the secreted. Potently blocks Kv1.1/KCNA1 (85%), Kv1.2/KCNA2 (91%), Kv1.3/KCNA3 (89%), Kv1.6/KCNA6 (94%), and Shaker (97%). This Tityus serrulatus (Brazilian scorpion) protein is Putative potassium channel toxin Ts25.